Consider the following 141-residue polypeptide: Nucleoside diphosphate kinase (141 aa).

Lys11, Phe59, Arg87, Thr93, Arg104, and Asn114 together coordinate ATP. His117 acts as the Pros-phosphohistidine intermediate in catalysis.

It belongs to the NDK family. In terms of assembly, homotetramer. Mg(2+) serves as cofactor.

The protein localises to the cytoplasm. It catalyses the reaction a 2'-deoxyribonucleoside 5'-diphosphate + ATP = a 2'-deoxyribonucleoside 5'-triphosphate + ADP. The catalysed reaction is a ribonucleoside 5'-diphosphate + ATP = a ribonucleoside 5'-triphosphate + ADP. Major role in the synthesis of nucleoside triphosphates other than ATP. The ATP gamma phosphate is transferred to the NDP beta phosphate via a ping-pong mechanism, using a phosphorylated active-site intermediate. In Variovorax paradoxus (strain S110), this protein is Nucleoside diphosphate kinase.